Consider the following 155-residue polypeptide: MRRRRAEPRVVSPDPVYGEVLVTRMVNKIMWDGKKSIAQKIVYGAIDILSQKTGKDGIEVFKQAIENVKPIVEVRPRRIGGATYQVPVEVQEPRKTTLAIRWIVDIARSKKGKPMQEKLAEELLNAYNNTGAAIKKREDVHKMAEANRAFAHFRW.

It belongs to the universal ribosomal protein uS7 family. Part of the 30S ribosomal subunit. Contacts proteins S9 and S11.

Its function is as follows. One of the primary rRNA binding proteins, it binds directly to 16S rRNA where it nucleates assembly of the head domain of the 30S subunit. Is located at the subunit interface close to the decoding center, probably blocks exit of the E-site tRNA. The chain is Small ribosomal subunit protein uS7 from Fervidobacterium nodosum (strain ATCC 35602 / DSM 5306 / Rt17-B1).